A 956-amino-acid polypeptide reads, in one-letter code: Probable hypoxanthine oxidase XdhD (956 aa).

Q414, F445, and A727 together coordinate Mo-molybdopterin.

The protein belongs to the xanthine dehydrogenase family. The cofactor is [2Fe-2S] cluster. Requires Mo-molybdopterin as cofactor.

Its function is as follows. Probably has no xanthine dehydrogenase activity; however deletion results in increased adenine sensitivity, suggesting that this protein contributes to the conversion of adenine to guanine nucleotides during purine salvage. The chain is Probable hypoxanthine oxidase XdhD (xdhD) from Escherichia coli O157:H7.